The following is a 110-amino-acid chain: Protein RALF-like 19 (110 aa).

The signal sequence occupies residues 1 to 23 (MGIKILLILGLLTLAVVAESANA). A propeptide spans 24–58 (TWTLTKSCVNGQGCIGEDGELDYLMDSETNRRQLA) (removed in mature form). 2 cysteine pairs are disulfide-bonded: cysteine 76/cysteine 86 and cysteine 99/cysteine 105.

The protein belongs to the plant rapid alkalinization factor (RALF) family. Post-translationally, proteolytically cleaved, probably by S1P, a subtilisin-like serine protease (subtilase).

The protein resides in the secreted. Cell signaling peptide that may regulate plant stress, growth, and development. Mediates a rapid alkalinization of extracellular space by mediating a transient increase in the cytoplasmic Ca(2+) concentration leading to a calcium-dependent signaling events through a cell surface receptor and a concomitant activation of some intracellular mitogen-activated protein kinases. This is Protein RALF-like 19 (RALFL19) from Arabidopsis thaliana (Mouse-ear cress).